Reading from the N-terminus, the 570-residue chain is Proline--tRNA ligase (570 aa).

Belongs to the class-II aminoacyl-tRNA synthetase family. ProS type 1 subfamily. As to quaternary structure, homodimer.

The protein resides in the cytoplasm. It carries out the reaction tRNA(Pro) + L-proline + ATP = L-prolyl-tRNA(Pro) + AMP + diphosphate. In terms of biological role, catalyzes the attachment of proline to tRNA(Pro) in a two-step reaction: proline is first activated by ATP to form Pro-AMP and then transferred to the acceptor end of tRNA(Pro). As ProRS can inadvertently accommodate and process non-cognate amino acids such as alanine and cysteine, to avoid such errors it has two additional distinct editing activities against alanine. One activity is designated as 'pretransfer' editing and involves the tRNA(Pro)-independent hydrolysis of activated Ala-AMP. The other activity is designated 'posttransfer' editing and involves deacylation of mischarged Ala-tRNA(Pro). The misacylated Cys-tRNA(Pro) is not edited by ProRS. The protein is Proline--tRNA ligase of Shewanella pealeana (strain ATCC 700345 / ANG-SQ1).